We begin with the raw amino-acid sequence, 279 residues long: Putative expansin-A26 (279 aa).

Positions 1-27 (MKLLEKMIYVEFLMIIMAMWVVPMSYG) are cleaved as a signal peptide. The region spanning 76-186 (QGACGYGNLF…RRIPCSKTGG (111 aa)) is the Expansin-like EG45 domain. An Expansin-like CBD domain is found at 196–275 (YFLMVLIYNV…NWGFGQTFDG (80 aa)).

It belongs to the expansin family. Expansin A subfamily.

The protein resides in the secreted. It localises to the cell wall. Its subcellular location is the membrane. In terms of biological role, causes loosening and extension of plant cell walls by disrupting non-covalent bonding between cellulose microfibrils and matrix glucans. No enzymatic activity has been found. This Arabidopsis thaliana (Mouse-ear cress) protein is Putative expansin-A26 (EXPA26).